The sequence spans 373 residues: tRNA (guanine(26)-N(2))-dimethyltransferase (373 aa).

One can recognise a Trm1 methyltransferase domain in the interval 2-365; sequence KIISEGETKL…AELSDLVVLI (364 aa). S-adenosyl-L-methionine is bound by residues arginine 35, arginine 66, aspartate 86, aspartate 113, and alanine 114.

This sequence belongs to the class I-like SAM-binding methyltransferase superfamily. Trm1 family.

It carries out the reaction guanosine(26) in tRNA + 2 S-adenosyl-L-methionine = N(2)-dimethylguanosine(26) in tRNA + 2 S-adenosyl-L-homocysteine + 2 H(+). In terms of biological role, dimethylates a single guanine residue at position 26 of a number of tRNAs using S-adenosyl-L-methionine as donor of the methyl groups. This is tRNA (guanine(26)-N(2))-dimethyltransferase from Methanococcus maripaludis (strain C5 / ATCC BAA-1333).